Reading from the N-terminus, the 172-residue chain is Adenine phosphoribosyltransferase (172 aa).

Belongs to the purine/pyrimidine phosphoribosyltransferase family. As to quaternary structure, homodimer.

The protein resides in the cytoplasm. It catalyses the reaction AMP + diphosphate = 5-phospho-alpha-D-ribose 1-diphosphate + adenine. It functions in the pathway purine metabolism; AMP biosynthesis via salvage pathway; AMP from adenine: step 1/1. Catalyzes a salvage reaction resulting in the formation of AMP, that is energically less costly than de novo synthesis. The polypeptide is Adenine phosphoribosyltransferase (Streptococcus pyogenes serotype M5 (strain Manfredo)).